Reading from the N-terminus, the 349-residue chain is Protein RecA (349 aa).

65 to 72 serves as a coordination point for ATP; it reads GPESSGKT.

Belongs to the RecA family.

The protein localises to the cytoplasm. Its function is as follows. Can catalyze the hydrolysis of ATP in the presence of single-stranded DNA, the ATP-dependent uptake of single-stranded DNA by duplex DNA, and the ATP-dependent hybridization of homologous single-stranded DNAs. It interacts with LexA causing its activation and leading to its autocatalytic cleavage. The protein is Protein RecA of Azotobacter vinelandii.